We begin with the raw amino-acid sequence, 214 residues long: Histidine biosynthesis bifunctional protein HisIE (214 aa).

Positions 1–114 are phosphoribosyl-AMP cyclohydrolase; sequence MDLSAVRFDE…LEGEKDLGFV (114 aa). The tract at residues 115–214 is phosphoribosyl-ATP pyrophosphohydrolase; that stretch reads VGQVYATIKE…RSPYDGSHGN (100 aa).

The protein in the N-terminal section; belongs to the PRA-CH family. It in the C-terminal section; belongs to the PRA-PH family.

It localises to the cytoplasm. The enzyme catalyses 1-(5-phospho-beta-D-ribosyl)-ATP + H2O = 1-(5-phospho-beta-D-ribosyl)-5'-AMP + diphosphate + H(+). It catalyses the reaction 1-(5-phospho-beta-D-ribosyl)-5'-AMP + H2O = 1-(5-phospho-beta-D-ribosyl)-5-[(5-phospho-beta-D-ribosylamino)methylideneamino]imidazole-4-carboxamide. It functions in the pathway amino-acid biosynthesis; L-histidine biosynthesis; L-histidine from 5-phospho-alpha-D-ribose 1-diphosphate: step 2/9. Its pathway is amino-acid biosynthesis; L-histidine biosynthesis; L-histidine from 5-phospho-alpha-D-ribose 1-diphosphate: step 3/9. This is Histidine biosynthesis bifunctional protein HisIE from Thermus thermophilus (strain ATCC BAA-163 / DSM 7039 / HB27).